A 292-amino-acid chain; its full sequence is Small ribosomal subunit biogenesis GTPase RsgA (292 aa).

Residues 64 to 221 (RSELFRPAVA…LVDTPGFSSL (158 aa)) enclose the CP-type G domain. GTP contacts are provided by residues 113-116 (NKMD) and 164-172 (GPSGVGKST). Residues C245, C250, H252, and C258 each contribute to the Zn(2+) site.

This sequence belongs to the TRAFAC class YlqF/YawG GTPase family. RsgA subfamily. As to quaternary structure, monomer. Associates with 30S ribosomal subunit, binds 16S rRNA. Zn(2+) is required as a cofactor.

It localises to the cytoplasm. One of several proteins that assist in the late maturation steps of the functional core of the 30S ribosomal subunit. Helps release RbfA from mature subunits. May play a role in the assembly of ribosomal proteins into the subunit. Circularly permuted GTPase that catalyzes slow GTP hydrolysis, GTPase activity is stimulated by the 30S ribosomal subunit. This chain is Small ribosomal subunit biogenesis GTPase RsgA, found in Clostridium botulinum (strain ATCC 19397 / Type A).